A 525-amino-acid chain; its full sequence is GMP synthase [glutamine-hydrolyzing] (525 aa).

Residues 9-207 (RILILDFGSQ…VRDICQCEAL (199 aa)) form the Glutamine amidotransferase type-1 domain. Cys-86 (nucleophile) is an active-site residue. Active-site residues include His-181 and Glu-183. One can recognise a GMPS ATP-PPase domain in the interval 208-400 (WTPAKIIDDA…LGLPYDMLYR (193 aa)). ATP is bound at residue 235–241 (SGGVDSS).

As to quaternary structure, homodimer.

It catalyses the reaction XMP + L-glutamine + ATP + H2O = GMP + L-glutamate + AMP + diphosphate + 2 H(+). It participates in purine metabolism; GMP biosynthesis; GMP from XMP (L-Gln route): step 1/1. Catalyzes the synthesis of GMP from XMP. This is GMP synthase [glutamine-hydrolyzing] from Escherichia coli O139:H28 (strain E24377A / ETEC).